The following is a 1183-amino-acid chain: Probable RNA-dependent RNA polymerase 4 (1183 aa).

This sequence belongs to the RdRP family. As to expression, expressed in shoot apical meristem (SAM) and panicles.

It catalyses the reaction RNA(n) + a ribonucleoside 5'-triphosphate = RNA(n+1) + diphosphate. Functionally, probably involved in the RNA silencing pathway and required for the generation of small interfering RNAs (siRNAs). The chain is Probable RNA-dependent RNA polymerase 4 (RDR4) from Oryza sativa subsp. japonica (Rice).